The chain runs to 254 residues: Type III pantothenate kinase (254 aa).

Position 6–13 (6–13 (DVGNTNIV)) interacts with ATP. Residue 107–110 (GADR) participates in substrate binding. D109 (proton acceptor) is an active-site residue. D129 provides a ligand contact to K(+). T132 provides a ligand contact to ATP. Position 184 (T184) interacts with substrate.

It belongs to the type III pantothenate kinase family. In terms of assembly, homodimer. NH4(+) is required as a cofactor. K(+) serves as cofactor.

Its subcellular location is the cytoplasm. The enzyme catalyses (R)-pantothenate + ATP = (R)-4'-phosphopantothenate + ADP + H(+). Its pathway is cofactor biosynthesis; coenzyme A biosynthesis; CoA from (R)-pantothenate: step 1/5. Functionally, catalyzes the phosphorylation of pantothenate (Pan), the first step in CoA biosynthesis. The protein is Type III pantothenate kinase of Exiguobacterium sp. (strain ATCC BAA-1283 / AT1b).